The sequence spans 147 residues: Small ribosomal subunit protein uS12 (147 aa).

The protein belongs to the universal ribosomal protein uS12 family. As to quaternary structure, part of the 30S ribosomal subunit.

Functionally, with S4 and S5 plays an important role in translational accuracy. Located at the interface of the 30S and 50S subunits. In Thermofilum pendens (strain DSM 2475 / Hrk 5), this protein is Small ribosomal subunit protein uS12.